The sequence spans 502 residues: tRNA-2-methylthio-N(6)-dimethylallyladenosine synthase (502 aa).

In terms of domain architecture, MTTase N-terminal spans 12–129 (RTYQVRTYGC…LPVLLERARH (118 aa)). Residues C21, C58, C92, C166, C170, and C173 each coordinate [4Fe-4S] cluster. Residues 152 to 383 (RESTYAGWVS…ACVEEITWAE (232 aa)) enclose the Radical SAM core domain. The 71-residue stretch at 385-455 (RRLVGETVEV…PHHLNADGEP (71 aa)) folds into the TRAM domain. A disordered region spans residues 451 to 502 (ADGEPLAHRRTPAGDAAEAGRRPRTAGVSLGLPTVGAPPSPVPPAASSACAC).

Belongs to the methylthiotransferase family. MiaB subfamily. As to quaternary structure, monomer. Requires [4Fe-4S] cluster as cofactor.

The protein resides in the cytoplasm. It carries out the reaction N(6)-dimethylallyladenosine(37) in tRNA + (sulfur carrier)-SH + AH2 + 2 S-adenosyl-L-methionine = 2-methylsulfanyl-N(6)-dimethylallyladenosine(37) in tRNA + (sulfur carrier)-H + 5'-deoxyadenosine + L-methionine + A + S-adenosyl-L-homocysteine + 2 H(+). Its function is as follows. Catalyzes the methylthiolation of N6-(dimethylallyl)adenosine (i(6)A), leading to the formation of 2-methylthio-N6-(dimethylallyl)adenosine (ms(2)i(6)A) at position 37 in tRNAs that read codons beginning with uridine. In Salinispora arenicola (strain CNS-205), this protein is tRNA-2-methylthio-N(6)-dimethylallyladenosine synthase.